The chain runs to 544 residues: Fructose dehydrogenase large subunit (544 aa).

14–30 (GAGICGSLLAHKLVRNG) is an FAD binding site. His478 serves as the catalytic Proton acceptor.

It belongs to the GMC oxidoreductase family. Heterotrimer composed of FdhL, FdhS and FdhC. FAD serves as cofactor.

It is found in the cell membrane. It carries out the reaction keto-D-fructose + a ubiquinone = 5-dehydro-D-fructose + a ubiquinol. Catalytic subunit of fructose dehydrogenase, an enzyme that catalyzes the oxidation of D-fructose to produce 5-keto-D-fructose. The chain is Fructose dehydrogenase large subunit (fdhL) from Gluconobacter japonicus.